The chain runs to 82 residues: Myosin light chain alkali (82 aa).

In terms of domain architecture, EF-hand spans glycine 7 to asparagine 42.

Myosin is a hexamer of 2 heavy chains and 4 light chains.

In Drosophila teissieri (Fruit fly), this protein is Myosin light chain alkali (Mlc1).